Reading from the N-terminus, the 695-residue chain is Phosphate acetyltransferase (695 aa).

The phosphate acetyltransferase stretch occupies residues 372–695 (AFRYRLVKRA…LTAVQAASQR (324 aa)).

It in the N-terminal section; belongs to the CobB/CobQ family. The protein in the C-terminal section; belongs to the phosphate acetyltransferase and butyryltransferase family. Homohexamer.

The protein localises to the cytoplasm. It catalyses the reaction acetyl-CoA + phosphate = acetyl phosphate + CoA. It participates in metabolic intermediate biosynthesis; acetyl-CoA biosynthesis; acetyl-CoA from acetate: step 2/2. In terms of biological role, involved in acetate metabolism. The protein is Phosphate acetyltransferase (pta) of Nitrosomonas europaea (strain ATCC 19718 / CIP 103999 / KCTC 2705 / NBRC 14298).